We begin with the raw amino-acid sequence, 121 residues long: Small ribosomal subunit protein uS11 (121 aa).

This sequence belongs to the universal ribosomal protein uS11 family. As to quaternary structure, part of the 30S ribosomal subunit. Interacts with proteins S7 and S18. Binds to IF-3.

Its function is as follows. Located on the platform of the 30S subunit, it bridges several disparate RNA helices of the 16S rRNA. Forms part of the Shine-Dalgarno cleft in the 70S ribosome. The protein is Small ribosomal subunit protein uS11 of Ureaplasma parvum serovar 3 (strain ATCC 27815 / 27 / NCTC 11736).